A 116-amino-acid polypeptide reads, in one-letter code: Cell division protein FtsL (116 aa).

Residues methionine 1–threonine 24 lie on the Cytoplasmic side of the membrane. The helical transmembrane segment at valine 25–valine 45 threads the bilayer. At arginine 46–glutamate 116 the chain is on the periplasmic side.

The protein belongs to the FtsL family. As to quaternary structure, part of a complex composed of FtsB, FtsL and FtsQ.

The protein resides in the cell inner membrane. Essential cell division protein. May link together the upstream cell division proteins, which are predominantly cytoplasmic, with the downstream cell division proteins, which are predominantly periplasmic. This is Cell division protein FtsL from Francisella tularensis subsp. tularensis (strain SCHU S4 / Schu 4).